We begin with the raw amino-acid sequence, 327 residues long: 7,8-didemethyl-8-hydroxy-5-deazariboflavin synthase (327 aa).

The region spanning 6-244 is the Radical SAM core domain; sequence ITFSRNVFLP…EEVAVQVAPN (239 aa). Residues cysteine 20, cysteine 24, and cysteine 27 each contribute to the [4Fe-4S] cluster site.

Belongs to the radical SAM superfamily. CofG family. In terms of assembly, consists of two subunits, CofG and CofH. [4Fe-4S] cluster serves as cofactor.

The catalysed reaction is 5-amino-5-(4-hydroxybenzyl)-6-(D-ribitylimino)-5,6-dihydrouracil + S-adenosyl-L-methionine = 7,8-didemethyl-8-hydroxy-5-deazariboflavin + 5'-deoxyadenosine + L-methionine + NH4(+) + H(+). Its pathway is cofactor biosynthesis; coenzyme F0 biosynthesis. Functionally, catalyzes the radical-mediated synthesis of 7,8-didemethyl-8-hydroxy-5-deazariboflavin from 5-amino-5-(4-hydroxybenzyl)-6-(D-ribitylimino)-5,6-dihydrouracil. This Methanosphaerula palustris (strain ATCC BAA-1556 / DSM 19958 / E1-9c) protein is 7,8-didemethyl-8-hydroxy-5-deazariboflavin synthase.